Consider the following 176-residue polypeptide: NAD(P)H-quinone oxidoreductase subunit 6, chloroplastic (176 aa).

A run of 5 helical transmembrane segments spans residues 10–30 (FLLV…VLLP), 32–52 (PIFS…LYIL), 61–81 (AQLL…VMFM), 92–112 (LWTV…FSLM), and 152–172 (FFLP…GAIS).

This sequence belongs to the complex I subunit 6 family. NDH is composed of at least 16 different subunits, 5 of which are encoded in the nucleus.

Its subcellular location is the plastid. It localises to the chloroplast thylakoid membrane. It carries out the reaction a plastoquinone + NADH + (n+1) H(+)(in) = a plastoquinol + NAD(+) + n H(+)(out). It catalyses the reaction a plastoquinone + NADPH + (n+1) H(+)(in) = a plastoquinol + NADP(+) + n H(+)(out). In terms of biological role, NDH shuttles electrons from NAD(P)H:plastoquinone, via FMN and iron-sulfur (Fe-S) centers, to quinones in the photosynthetic chain and possibly in a chloroplast respiratory chain. The immediate electron acceptor for the enzyme in this species is believed to be plastoquinone. Couples the redox reaction to proton translocation, and thus conserves the redox energy in a proton gradient. This Barbarea verna (Land cress) protein is NAD(P)H-quinone oxidoreductase subunit 6, chloroplastic (ndhG).